A 323-amino-acid chain; its full sequence is Lipid A biosynthesis acyltransferase 1 (323 aa).

The helical transmembrane segment at 23–43 (YWGAWLGVAAMAGIALTPPKF) threads the bilayer. The HXXXXD motif signature appears at 139-144 (HGWAVD).

Belongs to the LpxL/LpxM/LpxP family. LpxM subfamily.

It localises to the cell inner membrane. The enzyme catalyses an alpha-Kdo-(2-&gt;4)-alpha-Kdo-(2-&gt;6)-(acyl)-lipid IVA + a fatty acyl-[ACP] = an alpha-Kdo-(2-&gt;4)-alpha-Kdo-(2-&gt;6)-lipid A + holo-[ACP]. It participates in glycolipid biosynthesis; KDO(2)-lipid A biosynthesis; KDO(2)-lipid A from CMP-3-deoxy-D-manno-octulosonate and lipid IV(A): step 4/4. It functions in the pathway bacterial outer membrane biogenesis; lipopolysaccharide biosynthesis. Functionally, catalyzes the transfer of an acyl chain from an acyl-[acyl-carrier-protein] (ACP) to a Kdo(2)-(acyl)-lipid IV(A) to form a Kdo(2)-lipid A. In Shigella flexneri, this protein is Lipid A biosynthesis acyltransferase 1.